Here is a 286-residue protein sequence, read N- to C-terminus: 4-hydroxybenzoate octaprenyltransferase (286 aa).

The next 8 helical transmembrane spans lie at 20-40 (IGTFLLLWPCLMALVLAAGGM), 43-63 (LKVLIIFVIGVVVMRACGCII), 95-115 (ILFVVMGLLAFGLVLMLNPLV), 116-136 (VQLSFVGIILTIIYPFTKRFT), 142-162 (FLGVVWSWSIPMAYAAQLGTV), 167-187 (WWLFAANWCWTVAYDTMYAMV), 210-230 (QIIGLFQLAALGCFIMAGLSA), and 235-255 (VFALGILTFIGFGLYQQKLIF).

The protein belongs to the UbiA prenyltransferase family. The cofactor is Mg(2+).

The protein resides in the cell inner membrane. The catalysed reaction is all-trans-octaprenyl diphosphate + 4-hydroxybenzoate = 4-hydroxy-3-(all-trans-octaprenyl)benzoate + diphosphate. It functions in the pathway cofactor biosynthesis; ubiquinone biosynthesis. In terms of biological role, catalyzes the prenylation of para-hydroxybenzoate (PHB) with an all-trans polyprenyl group. Mediates the second step in the final reaction sequence of ubiquinone-8 (UQ-8) biosynthesis, which is the condensation of the polyisoprenoid side chain with PHB, generating the first membrane-bound Q intermediate 3-octaprenyl-4-hydroxybenzoate. This chain is 4-hydroxybenzoate octaprenyltransferase, found in Shewanella loihica (strain ATCC BAA-1088 / PV-4).